A 179-amino-acid polypeptide reads, in one-letter code: Nicotinamide-nucleotide adenylyltransferase (179 aa).

This sequence belongs to the archaeal NMN adenylyltransferase family.

Its subcellular location is the cytoplasm. It catalyses the reaction beta-nicotinamide D-ribonucleotide + ATP + H(+) = diphosphate + NAD(+). It participates in cofactor biosynthesis; NAD(+) biosynthesis; NAD(+) from nicotinamide D-ribonucleotide: step 1/1. This is Nicotinamide-nucleotide adenylyltransferase from Thermoplasma acidophilum (strain ATCC 25905 / DSM 1728 / JCM 9062 / NBRC 15155 / AMRC-C165).